The following is a 351-amino-acid chain: Protein Wnt-4 (351 aa).

The first 22 residues, 1 to 22 (MSPRSCLRSLRLLVFAVFSAAA), serve as a signal peptide directing secretion. Intrachain disulfides connect cysteine 78/cysteine 89, cysteine 128/cysteine 136, cysteine 138/cysteine 155, cysteine 206/cysteine 220, cysteine 208/cysteine 215, cysteine 280/cysteine 311, cysteine 296/cysteine 306, cysteine 310/cysteine 350, cysteine 326/cysteine 341, cysteine 328/cysteine 338, and cysteine 333/cysteine 334. N-linked (GlcNAc...) asparagine glycosylation occurs at asparagine 88. Residue serine 212 is the site of O-palmitoleoyl serine; by PORCN attachment. N-linked (GlcNAc...) asparagine glycosylation is present at asparagine 297.

Belongs to the Wnt family. In terms of assembly, interacts with PORCN. Interacts with PKD1. In terms of processing, palmitoleoylation is required for efficient binding to frizzled receptors. Depalmitoleoylation leads to Wnt signaling pathway inhibition. In adults in lung and brain.

It localises to the secreted. The protein resides in the extracellular space. The protein localises to the extracellular matrix. In terms of biological role, ligand for members of the frizzled family of seven transmembrane receptors. Plays an important role in the embryonic development of the urogenital tract and the lung. Required for normal mesenchyme to epithelium transition during embryonic kidney development. Required for the formation of early epithelial renal vesicles during kidney development. Required for normal formation of the Mullerian duct in females, and normal levels of oocytes in the ovaries. Required for normal down-regulation of 3 beta-hydroxysteroid dehydrogenase in the ovary. Required for normal lung development and for normal patterning of trachael cartilage rings. This chain is Protein Wnt-4 (Wnt4), found in Mus musculus (Mouse).